Consider the following 359-residue polypeptide: MSPTPRRRATLASLAAELKVSRTTVSNAFNRPDQLSADLRERVLATAKRLGYAGPDPVARSLRTRKAGAVGLVMAEPLTYFFSDPAARDFVAGVAQSCEELGQGLQLVSVGSSRSLADGTAAVLGAGVDGFVVYSVGDDDPYLQVVLQRRLPVVVVDQPKDLSGVSRVGIDDRAAMRELAGYVLGLGHRELGLLTMRLGRDRRQDLVDAERLRSPTFDVQRERIVGVWEAMTAAGVDPDSLTVVESYEHLPTSGGTAAKVALQANPRLTALMCTADILALSAMDYLRAHGIYVPGQMTVTGFDGVPEALSRGLTTVAQPSLHKGHRAGELLLKPPRSGLPVIEVLDTELVRGRTAGPPA.

Residues 9–64 enclose the HTH lacI-type domain; sequence ATLASLAAELKVSRTTVSNAFNRPDQLSADLRERVLATAKRLGYAGPDPVARSLRT. Residues 11–30 constitute a DNA-binding region (H-T-H motif); the sequence is LASLAAELKVSRTTVSNAFN.

Its function is as follows. Transcriptional regulator that negatively regulates transcription of the mce4 operon, which is involved in cholesterol transport and utilization. Acts by binding to the promoter region of the mce4 operon. It affects the utilization of host cholesterol as a carbon source, impacting the host's innate immune response. This Mycobacterium tuberculosis (strain ATCC 25618 / H37Rv) protein is HTH-type transcriptional regulator Rv3575c.